A 798-amino-acid polypeptide reads, in one-letter code: uncharacterized protein (798 aa).

Over residues 1–13 (MSSSQSPSTPSAS) the composition is skewed to low complexity. The transit peptide at 1 to 58 (MSSSQSPSTPSASLVDSSDSKHPDDLPQIYKRRSVWTSSEDAVSSSNSPEQTTPFTVR) directs the protein to the chloroplast. Disordered regions lie at residues 1–99 (MSSS…WQDA), 135–158 (AEKK…SMCT), and 417–473 (TGLI…AEPS). Over residues 35-55 (VWTSSEDAVSSSNSPEQTTPF) the composition is skewed to polar residues. Positions 57–79 (VREDTNADIARELDLPDDPEPHL) are enriched in basic and acidic residues. Residues 137-146 (KKKRKKKKKA) show a composition bias toward basic residues. Positions 462-473 (AAPAEAQGAEPS) are enriched in low complexity. Residues 578 to 658 (RSNMEVAGKL…MLSEARGLRD (81 aa)) adopt a coiled-coil conformation. Residues 749-798 (DDLKAPAPEPAPLSPGGHRSVESLADEAGITDQAGSLLPAKDNRPSEDLD) are disordered. Serine 762 bears the Phosphoserine mark. The span at 789 to 798 (KDNRPSEDLD) shows a compositional bias: basic and acidic residues.

Its subcellular location is the plastid. It localises to the chloroplast. This is an uncharacterized protein from Arabidopsis thaliana (Mouse-ear cress).